A 530-amino-acid polypeptide reads, in one-letter code: Light-independent protochlorophyllide reductase subunit B (530 aa).

Aspartate 36 contacts [4Fe-4S] cluster. Aspartate 287 acts as the Proton donor in catalysis. Glycine 422–leucine 423 contributes to the substrate binding site. A disordered region spans residues proline 453–alanine 472. Residues alanine 454 to glutamine 463 are compositionally biased toward polar residues.

The protein belongs to the ChlB/BchB/BchZ family. As to quaternary structure, protochlorophyllide reductase is composed of three subunits; BchL, BchN and BchB. Forms a heterotetramer of two BchB and two BchN subunits. Requires [4Fe-4S] cluster as cofactor.

The catalysed reaction is chlorophyllide a + oxidized 2[4Fe-4S]-[ferredoxin] + 2 ADP + 2 phosphate = protochlorophyllide a + reduced 2[4Fe-4S]-[ferredoxin] + 2 ATP + 2 H2O. The protein operates within porphyrin-containing compound metabolism; bacteriochlorophyll biosynthesis (light-independent). Component of the dark-operative protochlorophyllide reductase (DPOR) that uses Mg-ATP and reduced ferredoxin to reduce ring D of protochlorophyllide (Pchlide) to form chlorophyllide a (Chlide). This reaction is light-independent. The NB-protein (BchN-BchB) is the catalytic component of the complex. The polypeptide is Light-independent protochlorophyllide reductase subunit B (Rhodopseudomonas palustris (strain BisB18)).